Here is a 433-residue protein sequence, read N- to C-terminus: UDP-N-acetylmuramoylalanine--D-glutamate ligase (433 aa).

125 to 131 (GTSGKTT) contacts ATP.

It belongs to the MurCDEF family.

It localises to the cytoplasm. It carries out the reaction UDP-N-acetyl-alpha-D-muramoyl-L-alanine + D-glutamate + ATP = UDP-N-acetyl-alpha-D-muramoyl-L-alanyl-D-glutamate + ADP + phosphate + H(+). It participates in cell wall biogenesis; peptidoglycan biosynthesis. Cell wall formation. Catalyzes the addition of glutamate to the nucleotide precursor UDP-N-acetylmuramoyl-L-alanine (UMA). In Nitratidesulfovibrio vulgaris (strain ATCC 29579 / DSM 644 / CCUG 34227 / NCIMB 8303 / VKM B-1760 / Hildenborough) (Desulfovibrio vulgaris), this protein is UDP-N-acetylmuramoylalanine--D-glutamate ligase.